Reading from the N-terminus, the 632-residue chain is Signal-transduction and transcriptional-control protein (632 aa).

The 74-residue stretch at 197–270 (TYQYLNKITD…GQSYEDEEIM (74 aa)) folds into the PAS domain. The 231-residue stretch at 324–554 (IIGQSEAMKR…LENCIENIVN (231 aa)) folds into the Sigma-54 factor interaction domain. ATP contacts are provided by residues 352–359 (GESGTGKE) and 416–425 (ANEGTLFLDE). Residues 606-625 (ISKACRILGINRSTLYIKIK) constitute a DNA-binding region (H-T-H motif).

The chain is Signal-transduction and transcriptional-control protein (stc) from Clostridium beijerinckii (Clostridium MP).